The primary structure comprises 145 residues: Large ribosomal subunit protein mL43 (145 aa).

The protein belongs to the mitochondrion-specific ribosomal protein mL43 family. Component of the mitochondrial large ribosomal subunit (mt-LSU). Mature yeast 74S mitochondrial ribosomes consist of a small (37S) and a large (54S) subunit. The 37S small subunit contains a 15S ribosomal RNA (15S mt-rRNA) and at least 32 different proteins. The 54S large subunit contains a 21S rRNA (21S mt-rRNA) and at least 45 different proteins.

The protein localises to the mitochondrion. Component of the mitochondrial ribosome (mitoribosome), a dedicated translation machinery responsible for the synthesis of mitochondrial genome-encoded proteins, including at least some of the essential transmembrane subunits of the mitochondrial respiratory chain. The mitoribosomes are attached to the mitochondrial inner membrane and translation products are cotranslationally integrated into the membrane. Also has an extraribosomal function, being essential for mitochondrial genome integrity. May interact with MHR1 to take part in the mtDNA repair mechanism. The chain is Large ribosomal subunit protein mL43 (mrpl51) from Schizosaccharomyces pombe (strain 972 / ATCC 24843) (Fission yeast).